We begin with the raw amino-acid sequence, 294 residues long: MLGDLFTKPKKRKYATIPSDGTKADVPEGIMTKCPECKKIMYTKELQKNLMVCNYCGFHHPIGAKARIDMLVDEGSFEEIDASLTTANPLGFEDYMDRIEKDKQKSGLNEAIVTGHATIGGNPLVIAVMDSRFRMASMGSVVGEKILRAVEDADKTNKPFVIFTASGGARMQEGMLSLMQMAKTSAAFKRFSNHGGLIITVMTHPTTGGVSASFASLGDYNFAEPGALIGFAGRRVIEQTVREELPEDFQTAEFLLKHGQLDDCISRLDLQNKLSFILSIHVKAPGVGGEVDGE.

The region spanning 30–294 is the CoA carboxyltransferase N-terminal domain; sequence IMTKCPECKK…PGVGGEVDGE (265 aa). C34, C37, C53, and C56 together coordinate Zn(2+). A C4-type zinc finger spans residues 34 to 56; that stretch reads CPECKKIMYTKELQKNLMVCNYC.

The protein belongs to the AccD/PCCB family. In terms of assembly, acetyl-CoA carboxylase is a heterohexamer composed of biotin carboxyl carrier protein (AccB), biotin carboxylase (AccC) and two subunits each of ACCase subunit alpha (AccA) and ACCase subunit beta (AccD). It depends on Zn(2+) as a cofactor.

Its subcellular location is the cytoplasm. The enzyme catalyses N(6)-carboxybiotinyl-L-lysyl-[protein] + acetyl-CoA = N(6)-biotinyl-L-lysyl-[protein] + malonyl-CoA. It participates in lipid metabolism; malonyl-CoA biosynthesis; malonyl-CoA from acetyl-CoA: step 1/1. Its function is as follows. Component of the acetyl coenzyme A carboxylase (ACC) complex. Biotin carboxylase (BC) catalyzes the carboxylation of biotin on its carrier protein (BCCP) and then the CO(2) group is transferred by the transcarboxylase to acetyl-CoA to form malonyl-CoA. This chain is Acetyl-coenzyme A carboxylase carboxyl transferase subunit beta, found in Listeria monocytogenes serovar 1/2a (strain ATCC BAA-679 / EGD-e).